Consider the following 176-residue polypeptide: Protein tyrosine phosphatase PRL-1 (176 aa).

Positions 13-165 constitute a Tyrosine-protein phosphatase domain; the sequence is GESDAVVFRF…YKPRHQEGNE (153 aa). The cysteines at positions 52 and 107 are disulfide-linked. Residue aspartate 75 is the Proton donor of the active site. Cysteine 107 (phosphocysteine intermediate) is an active-site residue. A substrate-binding site is contributed by 109–113; it reads AGLGR. Residue cysteine 173 is modified to Cysteine methyl ester. Cysteine 173 carries the S-farnesyl cysteine lipid modification. Residues 174-176 constitute a propeptide, removed in mature form; that stretch reads AVM.

It belongs to the protein-tyrosine phosphatase family.

Its subcellular location is the flagellar pocket. It carries out the reaction O-phospho-L-tyrosyl-[protein] + H2O = L-tyrosyl-[protein] + phosphate. Activated in a reduced environment which promotes the reduction of the disulfide bond between the regulatory Cys-52 and the catalytic Cys-107 residues. Inhibited by sodium orthovanadate. Functionally, has protein tyrosine phosphatase activity. In Trypanosoma cruzi (strain CL Brener), this protein is Protein tyrosine phosphatase PRL-1.